Consider the following 718-residue polypeptide: MSASDLTSVQAAAPQGSRQILVTSALPYANGQIHIGHLVEYIQTDIWVRTLRMHGHEVYYIGADDTHGTPIMLRAEKEGLTPKQLIDRVWTEHKRDFDSFGVSFDNFYTTDSEENRVLSENIYLALQEAGLIAEREIEQAYDPVKEMFLPDRFIKGECPKCHAKDQYGDSCEVCGSTYLPTELLNPYSVVSGATPVRKTSKHYFFRLSDPRCESFLREWVSGLAQPEATNKMREWLGDAGESKLADWDISRDAPYFGFEIPGAPGKYFYVWLDAPVGYYASFKNLCERNGIDFDAWIRPGSKAEQYHFIGKDILYFHTLFWPAMLEFSGHRTPTNVFAHGFLTVDGAKMSKSRGTFITAQSYIDTGLNPEWLRYYFAAKLNATMEDIDLNLDDFQARVNSDLVGKYVNIASRAAGFLIKRFDGRVQDSAMNHPLVAKLRDAIPQIAASYEAREYGRALRHTMELADEVNAYVDGAKPWDLAKDPANAVALHETCSVSLEAFRLLSLALKPVMPRVAVAVEAFFGIAPLAWADAAKPLSSAQPIKAYQHLMTRVDAKQIEALLAANRDSLQAEAAGAAAAGANAAKDAKSNAKASAKPAAVNGADDAPISIDDFAKIDLRIAKIVACQAVEGSDKLLQLTLDVGEEKTRNVFSGIKSAYQPEQLVGKLTVMVANLAPRKMKFGLSEGMVLAASATDEKAEPGLYILEPHSGAKPGMRVK.

Residues 27-37 carry the 'HIGH' region motif; that stretch reads PYANGQIHIGH. Cysteine 158, cysteine 161, cysteine 171, and cysteine 174 together coordinate Zn(2+). A 'KMSKS' region motif is present at residues 348-352; sequence KMSKS. Lysine 351 lines the ATP pocket. A tRNA-binding domain is found at 612–718; sequence DFAKIDLRIA…SGAKPGMRVK (107 aa).

Belongs to the class-I aminoacyl-tRNA synthetase family. MetG type 1 subfamily. Homodimer. The cofactor is Zn(2+).

The protein localises to the cytoplasm. The catalysed reaction is tRNA(Met) + L-methionine + ATP = L-methionyl-tRNA(Met) + AMP + diphosphate. Functionally, is required not only for elongation of protein synthesis but also for the initiation of all mRNA translation through initiator tRNA(fMet) aminoacylation. The sequence is that of Methionine--tRNA ligase from Burkholderia orbicola (strain AU 1054).